The chain runs to 38 residues: Photosystem II reaction center protein L (38 aa).

Residues 17–37 (SLYWGLLLIXVLAVLFSNYFF) traverse the membrane as a helical segment.

Belongs to the PsbL family. In terms of assembly, PSII is composed of 1 copy each of membrane proteins PsbA, PsbB, PsbC, PsbD, PsbE, PsbF, PsbH, PsbI, PsbJ, PsbK, PsbL, PsbM, PsbT, PsbX, PsbY, PsbZ, Psb30/Ycf12, at least 3 peripheral proteins of the oxygen-evolving complex and a large number of cofactors. It forms dimeric complexes.

The protein localises to the plastid. It is found in the chloroplast thylakoid membrane. One of the components of the core complex of photosystem II (PSII). PSII is a light-driven water:plastoquinone oxidoreductase that uses light energy to abstract electrons from H(2)O, generating O(2) and a proton gradient subsequently used for ATP formation. It consists of a core antenna complex that captures photons, and an electron transfer chain that converts photonic excitation into a charge separation. This subunit is found at the monomer-monomer interface and is required for correct PSII assembly and/or dimerization. The polypeptide is Photosystem II reaction center protein L (Allium textile (Textile onion)).